The sequence spans 702 residues: Soluble guanylate cyclase gcy-31 (702 aa).

A heme-binding site is contributed by H104. The stretch at 368-406 (TQQSAELKLLLHQEAQKSRNMRENMNRLKKERRRTDKLL) forms a coiled coil. One can recognise a Guanylate cyclase domain in the interval 435–564 (TILFTDIVEF…ETVYVANKME (130 aa)). Positions 440 and 484 each coordinate Mg(2+). The disordered stretch occupies residues 614–702 (RHGPHRVPSP…QDLTPRKSIT (89 aa)). A compositionally biased stretch (acidic residues) spans 633-643 (SQTEDDDDDEL). A compositionally biased stretch (polar residues) spans 683 to 695 (RNSNKTPRQSQDL).

It belongs to the adenylyl cyclase class-4/guanylyl cyclase family. As to quaternary structure, heterodimer; with other soluble guanylate cyclases. Requires heme as cofactor. As to expression, expressed in a pair of bilaterally symmetric neurons in the head.

The protein resides in the cytoplasm. It catalyses the reaction GTP = 3',5'-cyclic GMP + diphosphate. Its activity is regulated as follows. May be regulated by molecular oxygen. Probably not activated by nitric oxide (NO). Its function is as follows. Synthesizes cyclic GMP (cGMP) from GTP. May play a role in embryogenesis. The protein is Soluble guanylate cyclase gcy-31 (gcy-31) of Caenorhabditis elegans.